Consider the following 146-residue polypeptide: Hut operon positive regulatory protein (146 aa).

Belongs to the HutP family. As to quaternary structure, homohexamer.

Functionally, antiterminator that binds to cis-acting regulatory sequences on the mRNA in the presence of histidine, thereby suppressing transcription termination and activating the hut operon for histidine utilization. This Bacillus anthracis (strain CDC 684 / NRRL 3495) protein is Hut operon positive regulatory protein.